The primary structure comprises 1002 residues: Inversin-B (1002 aa).

ANK repeat units follow at residues 9-39 (SLASPIQAAAVTGDKTTLLRLIASSPQVIDQ), 43-72 (LGRTPLMYSVLGDRRSCAEALLKHGAKVNR), 76-105 (SGRTALHLAAQTGNHRLLKLLLSRKADCTH), 109-140 (CDITALHLSTRHQDTQCLVLLLKYTPPGQVDA), 144-173 (RKQTALHWSAYYNRPQHVRLLVRHGSNIGI), 177-209 (EGKIPLHWAAGHKDPEAALTVRCLFEAAPTESL), 216-246 (EGRTPLHLAVGDGNQEVVRLLTSYRGCNVAP), 250-279 (LFRTPLHWAALLGHTPIAHLLLERNNSPNI), 284-313 (QGATPLHYAAQGNCPDTVRVLLSHPSVRDE), 317-346 (EGRTALMWAAGKGSDEVVRTMLELNPKLEV), 352-381 (YGGTALHAASLSGQITTVRILLENRAQADA), 385-414 (MKHTPLFRACEMGHREVIATLIKGGAKVHL), 418-447 (DGRSPLHWAALGGNANVCQILIENNINPDA), 451-480 (EGRTPLQCAAYGGYIGCMEVLMENKADPNI), 484-513 (NGRTALHWSCNNGYLDAVKLLLGYNAFPNQ), and 519-549 (ERYTPLDYALLGGHQEVIQFMLEHGALSIAA). The D-box 1 signature appears at 486 to 494 (RTALHWSCN). One can recognise an IQ 1 domain in the interval 551-580 (QDIAAFKIQAVYKGHKVRRAFQERKNLLMK). 3 stretches are compositionally biased toward basic and acidic residues: residues 586-599 (KGAAAKKREGENRQ), 609-621 (KQKDADSMERQNK), and 643-656 (AEDRKGKHREENLE). 2 disordered regions span residues 586-804 (KGAA…KGRR) and 862-886 (SAKTGQRPLTETHKPPGKACRSSSA). 2 stretches are compositionally biased toward polar residues: residues 670–680 (QRITAQIQSSP) and 687–706 (NSIQIRTSPSGTSNTQSSPL). Basic and acidic residues-rich tracts occupy residues 733-763 (HQMESPDVVVHRIEDLIQKESRRKSHREERK) and 770-796 (QSSDYRLHTSEKEASDSAIHREEEGKK). A D-box 2 motif is present at residues 959 to 967 (RKQLFQRKN). Residues 966–995 (KNHAATVIQKAWRTYWVRKSSCKTRHSRSQ) enclose the IQ 2 domain.

In terms of assembly, interacts with apc2. Binds calmodulin.

It localises to the cytoplasm. It is found in the cytoskeleton. Required for normal renal development and establishment of left-right axis. Probably acts as a molecular switch between different Wnt signaling pathways. Inhibits the canonical Wnt pathway by targeting cytoplasmic disheveled for degradation by the ubiquitin-proteasome. This suggests that it is required in renal development to oppose the repression of terminal differentiation of tubular epithelial cells by Wnt signaling. Plays a central role in convergent extension movements in gastrulating embryos, a processus regulated by Wnt signaling. The chain is Inversin-B (invs-b) from Xenopus laevis (African clawed frog).